Reading from the N-terminus, the 228-residue chain is Ribulose-phosphate 3-epimerase-like protein 1 (228 aa).

Ser-10 provides a ligand contact to substrate. Positions 35, 37, and 70 each coordinate a divalent metal cation. Asp-37 serves as the catalytic Proton acceptor. Residues His-70, 146-149 (GFGE), 175-177 (DGG), and 197-198 (GS) contribute to the substrate site. Asp-175 serves as a coordination point for a divalent metal cation. The active-site Proton donor is the Asp-175.

It belongs to the ribulose-phosphate 3-epimerase family. As to quaternary structure, homodimer. It depends on Fe(2+) as a cofactor. Requires Mn(2+) as cofactor. Zn(2+) serves as cofactor. The cofactor is Co(2+).

It carries out the reaction D-ribulose 5-phosphate = D-xylulose 5-phosphate. Its pathway is carbohydrate degradation. Catalyzes the reversible epimerization of D-ribulose 5-phosphate to D-xylulose 5-phosphate. The polypeptide is Ribulose-phosphate 3-epimerase-like protein 1 (RPEL1) (Homo sapiens (Human)).